We begin with the raw amino-acid sequence, 121 residues long: Prefoldin subunit beta (121 aa).

It belongs to the prefoldin subunit beta family. In terms of assembly, heterohexamer of two alpha and four beta subunits.

It is found in the cytoplasm. Functionally, molecular chaperone capable of stabilizing a range of proteins. Seems to fulfill an ATP-independent, HSP70-like function in archaeal de novo protein folding. The chain is Prefoldin subunit beta from Methanoculleus marisnigri (strain ATCC 35101 / DSM 1498 / JR1).